Reading from the N-terminus, the 585-residue chain is Arginine--tRNA ligase (585 aa).

The short motif at 131 to 141 is the 'HIGH' region element; it reads ANPTGPMHVGH.

The protein belongs to the class-I aminoacyl-tRNA synthetase family. In terms of assembly, monomer.

The protein resides in the cytoplasm. It catalyses the reaction tRNA(Arg) + L-arginine + ATP = L-arginyl-tRNA(Arg) + AMP + diphosphate. This is Arginine--tRNA ligase from Brucella abortus (strain S19).